Here is a 339-residue protein sequence, read N- to C-terminus: Ketol-acid reductoisomerase (NADP(+)) (339 aa).

A KARI N-terminal Rossmann domain is found at 1 to 182 (MRVYYDRDAD…GGGRAGIIET (182 aa)). Residues 24 to 27 (YGSQ), Arg48, Ser51, Thr53, and 83 to 86 (DELQ) contribute to the NADP(+) site. His108 is a catalytic residue. Gly134 serves as a coordination point for NADP(+). In terms of domain architecture, KARI C-terminal knotted spans 183–328 (SFKEECETDL…AKLREMMPWI (146 aa)). Mg(2+) contacts are provided by Asp191, Glu195, Glu227, and Glu231. Ser252 contributes to the substrate binding site.

It belongs to the ketol-acid reductoisomerase family. Requires Mg(2+) as cofactor.

It carries out the reaction (2R)-2,3-dihydroxy-3-methylbutanoate + NADP(+) = (2S)-2-acetolactate + NADPH + H(+). It catalyses the reaction (2R,3R)-2,3-dihydroxy-3-methylpentanoate + NADP(+) = (S)-2-ethyl-2-hydroxy-3-oxobutanoate + NADPH + H(+). It functions in the pathway amino-acid biosynthesis; L-isoleucine biosynthesis; L-isoleucine from 2-oxobutanoate: step 2/4. The protein operates within amino-acid biosynthesis; L-valine biosynthesis; L-valine from pyruvate: step 2/4. Involved in the biosynthesis of branched-chain amino acids (BCAA). Catalyzes an alkyl-migration followed by a ketol-acid reduction of (S)-2-acetolactate (S2AL) to yield (R)-2,3-dihydroxy-isovalerate. In the isomerase reaction, S2AL is rearranged via a Mg-dependent methyl migration to produce 3-hydroxy-3-methyl-2-ketobutyrate (HMKB). In the reductase reaction, this 2-ketoacid undergoes a metal-dependent reduction by NADPH to yield (R)-2,3-dihydroxy-isovalerate. This is Ketol-acid reductoisomerase (NADP(+)) from Rhodopseudomonas palustris (strain BisB5).